Reading from the N-terminus, the 402-residue chain is Diaminopimelate decarboxylase (402 aa).

Residue Lys45 is modified to N6-(pyridoxal phosphate)lysine. Pyridoxal 5'-phosphate is bound by residues Gly224 and 259 to 262 (EPGR). Substrate-binding residues include Arg262, Arg298, and Tyr302. The active-site Proton donor is the Cys327. Residues Glu328 and Tyr356 each coordinate substrate. Pyridoxal 5'-phosphate is bound at residue Tyr356.

Belongs to the Orn/Lys/Arg decarboxylase class-II family. LysA subfamily. In terms of assembly, homodimer. It depends on pyridoxal 5'-phosphate as a cofactor.

It catalyses the reaction meso-2,6-diaminopimelate + H(+) = L-lysine + CO2. It participates in amino-acid biosynthesis; L-lysine biosynthesis via DAP pathway; L-lysine from DL-2,6-diaminopimelate: step 1/1. Functionally, specifically catalyzes the decarboxylation of meso-diaminopimelate (meso-DAP) to L-lysine. This chain is Diaminopimelate decarboxylase, found in Campylobacter jejuni subsp. jejuni serotype O:2 (strain ATCC 700819 / NCTC 11168).